Here is a 1073-residue protein sequence, read N- to C-terminus: Carbamoyl phosphate synthase large chain (1073 aa).

The tract at residues 1–399 (MPKREDIKKV…SLLKAFKSLD (399 aa)) is carboxyphosphate synthetic domain. The ATP site is built by Arg129, Arg169, Gly175, Gly176, Glu208, Val210, Glu215, Gly241, Val242, His243, Gln284, and Glu296. The ATP-grasp 1 domain occupies 133 to 325 (KETMLSIGEK…IARVTAKIAI (193 aa)). Gln284, Glu296, and Asn298 together coordinate Mg(2+). Positions 284, 296, and 298 each coordinate Mn(2+). Positions 400–540 (IDNQLGIKRW…YSTYEDTCET (141 aa)) are oligomerization domain. Residues 541–931 (NSTDKKKILI…YKAELAADNL (391 aa)) form a carbamoyl phosphate synthetic domain region. Residues 672–863 (YLLMQELGIP…LAKIAAKVIA (192 aa)) form the ATP-grasp 2 domain. Positions 708, 747, 749, 754, 779, 780, 781, 782, 822, and 834 each coordinate ATP. Mg(2+) is bound by residues Gln822, Glu834, and Asn836. The Mn(2+) site is built by Gln822, Glu834, and Asn836. The region spanning 930–1071 (NLLPLTGKVF…NEYHKEMEQK (142 aa)) is the MGS-like domain. The tract at residues 932 to 1073 (LPLTGKVFLS…YHKEMEQKEE (142 aa)) is allosteric domain.

It belongs to the CarB family. Composed of two chains; the small (or glutamine) chain promotes the hydrolysis of glutamine to ammonia, which is used by the large (or ammonia) chain to synthesize carbamoyl phosphate. Tetramer of heterodimers (alpha,beta)4. Mg(2+) serves as cofactor. It depends on Mn(2+) as a cofactor.

It carries out the reaction hydrogencarbonate + L-glutamine + 2 ATP + H2O = carbamoyl phosphate + L-glutamate + 2 ADP + phosphate + 2 H(+). The enzyme catalyses hydrogencarbonate + NH4(+) + 2 ATP = carbamoyl phosphate + 2 ADP + phosphate + 2 H(+). It participates in amino-acid biosynthesis; L-arginine biosynthesis; carbamoyl phosphate from bicarbonate: step 1/1. Its pathway is pyrimidine metabolism; UMP biosynthesis via de novo pathway; (S)-dihydroorotate from bicarbonate: step 1/3. Large subunit of the glutamine-dependent carbamoyl phosphate synthetase (CPSase). CPSase catalyzes the formation of carbamoyl phosphate from the ammonia moiety of glutamine, carbonate, and phosphate donated by ATP, constituting the first step of 2 biosynthetic pathways, one leading to arginine and/or urea and the other to pyrimidine nucleotides. The large subunit (synthetase) binds the substrates ammonia (free or transferred from glutamine from the small subunit), hydrogencarbonate and ATP and carries out an ATP-coupled ligase reaction, activating hydrogencarbonate by forming carboxy phosphate which reacts with ammonia to form carbamoyl phosphate. The protein is Carbamoyl phosphate synthase large chain of Methanosarcina mazei (strain ATCC BAA-159 / DSM 3647 / Goe1 / Go1 / JCM 11833 / OCM 88) (Methanosarcina frisia).